Reading from the N-terminus, the 612-residue chain is Isocitrate dehydrogenase kinase/phosphatase (612 aa).

Residues 327-333 and Lys348 contribute to the ATP site; that span reads APGIKGL. Residue Asp383 is part of the active site. Residues 593-612 are disordered; it reads AGAASNEQDAPDAGRSVRAA.

This sequence belongs to the AceK family.

The protein localises to the cytoplasm. It catalyses the reaction L-seryl-[isocitrate dehydrogenase] + ATP = O-phospho-L-seryl-[isocitrate dehydrogenase] + ADP + H(+). Its function is as follows. Bifunctional enzyme which can phosphorylate or dephosphorylate isocitrate dehydrogenase (IDH) on a specific serine residue. This is a regulatory mechanism which enables bacteria to bypass the Krebs cycle via the glyoxylate shunt in response to the source of carbon. When bacteria are grown on glucose, IDH is fully active and unphosphorylated, but when grown on acetate or ethanol, the activity of IDH declines drastically concomitant with its phosphorylation. This Paraburkholderia xenovorans (strain LB400) protein is Isocitrate dehydrogenase kinase/phosphatase.